Reading from the N-terminus, the 109-residue chain is MAADASQLDRLFEVIAARKGADAGSSYTAKLLAKGVPACAQKLGEEAVETVIAAVSGDGGGVVSESADLLYHWLVLMAASNTDPADVYAELERREGRSGLTEKAARGER.

The protein belongs to the PRA-PH family.

The protein localises to the cytoplasm. It catalyses the reaction 1-(5-phospho-beta-D-ribosyl)-ATP + H2O = 1-(5-phospho-beta-D-ribosyl)-5'-AMP + diphosphate + H(+). It participates in amino-acid biosynthesis; L-histidine biosynthesis; L-histidine from 5-phospho-alpha-D-ribose 1-diphosphate: step 2/9. This chain is Phosphoribosyl-ATP pyrophosphatase, found in Parvibaculum lavamentivorans (strain DS-1 / DSM 13023 / NCIMB 13966).